Reading from the N-terminus, the 536-residue chain is CTP synthase (536 aa).

Residues M1–L267 form an amidoligase domain region. A CTP-binding site is contributed by S13. S13 is a UTP binding site. Residue S14–I19 coordinates ATP. Residue Y54 participates in L-glutamine binding. D71 contributes to the ATP binding site. Mg(2+)-binding residues include D71 and E141. Residues D148–E150, K188–Q193, and K224 contribute to the CTP site. UTP-binding positions include K188 to Q193 and K224. Residue R240–A242 coordinates ATP. Residues T293 to N535 form the Glutamine amidotransferase type-1 domain. An L-glutamine-binding site is contributed by G355. C382 functions as the Nucleophile; for glutamine hydrolysis in the catalytic mechanism. L-glutamine contacts are provided by residues L383–Q386, E406, and R463. Active-site residues include H508 and E510.

It belongs to the CTP synthase family. In terms of assembly, homotetramer.

The catalysed reaction is UTP + L-glutamine + ATP + H2O = CTP + L-glutamate + ADP + phosphate + 2 H(+). The enzyme catalyses L-glutamine + H2O = L-glutamate + NH4(+). It carries out the reaction UTP + NH4(+) + ATP = CTP + ADP + phosphate + 2 H(+). The protein operates within pyrimidine metabolism; CTP biosynthesis via de novo pathway; CTP from UDP: step 2/2. With respect to regulation, allosterically activated by GTP, when glutamine is the substrate; GTP has no effect on the reaction when ammonia is the substrate. The allosteric effector GTP functions by stabilizing the protein conformation that binds the tetrahedral intermediate(s) formed during glutamine hydrolysis. Inhibited by the product CTP, via allosteric rather than competitive inhibition. In terms of biological role, catalyzes the ATP-dependent amination of UTP to CTP with either L-glutamine or ammonia as the source of nitrogen. Regulates intracellular CTP levels through interactions with the four ribonucleotide triphosphates. The sequence is that of CTP synthase from Staphylococcus aureus (strain NCTC 8325 / PS 47).